A 414-amino-acid polypeptide reads, in one-letter code: DNA polymerase IV 1 (414 aa).

The region spanning 8 to 189 is the UmuC domain; it reads IFHIDMNSFY…LPVGEMHGVG (182 aa). Mg(2+)-binding residues include Asp-12 and Asp-108. Glu-109 is an active-site residue. A disordered region spans residues 391–414; that stretch reads LKKEESKTKGTSFNKDFFQDEKKS.

The protein belongs to the DNA polymerase type-Y family. In terms of assembly, monomer. Mg(2+) is required as a cofactor.

The protein localises to the cytoplasm. The enzyme catalyses DNA(n) + a 2'-deoxyribonucleoside 5'-triphosphate = DNA(n+1) + diphosphate. Its function is as follows. Poorly processive, error-prone DNA polymerase involved in untargeted mutagenesis. Copies undamaged DNA at stalled replication forks, which arise in vivo from mismatched or misaligned primer ends. These misaligned primers can be extended by PolIV. Exhibits no 3'-5' exonuclease (proofreading) activity. May be involved in translesion synthesis (TSL), in conjunction with the beta clamp from PolIII. This Bacillus subtilis (strain 168) protein is DNA polymerase IV 1 (dinB1).